The sequence spans 530 residues: CTP synthase (530 aa).

An amidoligase domain region spans residues 1–264 (MPKLIIVTGG…GDFLTRRLRL (264 aa)). Residue Ser13 participates in CTP binding. Ser13 serves as a coordination point for UTP. ATP is bound at residue 14–19 (GVGKGV). Residue Tyr54 participates in L-glutamine binding. Asp71 lines the ATP pocket. Mg(2+) contacts are provided by Asp71 and Glu139. Residues 146–148 (DYE), 185–190 (KTKPLQ), and Lys221 contribute to the CTP site. UTP contacts are provided by residues 185–190 (KTKPLQ) and Lys221. A Glutamine amidotransferase type-1 domain is found at 289-530 (SVGMCGKYVE…LLKAALFAKR (242 aa)). L-glutamine is bound at residue Gly351. Residue Cys378 is the Nucleophile; for glutamine hydrolysis of the active site. L-glutamine-binding positions include 379–382 (FGMQ), Glu402, and Arg459. Active-site residues include His504 and Glu506.

The protein belongs to the CTP synthase family. As to quaternary structure, homotetramer.

The enzyme catalyses UTP + L-glutamine + ATP + H2O = CTP + L-glutamate + ADP + phosphate + 2 H(+). It catalyses the reaction L-glutamine + H2O = L-glutamate + NH4(+). It carries out the reaction UTP + NH4(+) + ATP = CTP + ADP + phosphate + 2 H(+). It participates in pyrimidine metabolism; CTP biosynthesis via de novo pathway; CTP from UDP: step 2/2. With respect to regulation, allosterically activated by GTP, when glutamine is the substrate; GTP has no effect on the reaction when ammonia is the substrate. The allosteric effector GTP functions by stabilizing the protein conformation that binds the tetrahedral intermediate(s) formed during glutamine hydrolysis. Inhibited by the product CTP, via allosteric rather than competitive inhibition. In terms of biological role, catalyzes the ATP-dependent amination of UTP to CTP with either L-glutamine or ammonia as the source of nitrogen. Regulates intracellular CTP levels through interactions with the four ribonucleotide triphosphates. This chain is CTP synthase, found in Pyrobaculum aerophilum (strain ATCC 51768 / DSM 7523 / JCM 9630 / CIP 104966 / NBRC 100827 / IM2).